The primary structure comprises 241 residues: Large ribosomal subunit protein uL3 (241 aa).

The interval 140 to 168 is disordered; that stretch reads SHRSIGSTGGRQDPGKTFKNKKMPGHMGD. At Gln151 the chain carries N5-methylglutamine.

It belongs to the universal ribosomal protein uL3 family. As to quaternary structure, part of the 50S ribosomal subunit. Forms a cluster with proteins L14 and L19. Post-translationally, methylated by PrmB.

One of the primary rRNA binding proteins, it binds directly near the 3'-end of the 23S rRNA, where it nucleates assembly of the 50S subunit. This is Large ribosomal subunit protein uL3 from Azorhizobium caulinodans (strain ATCC 43989 / DSM 5975 / JCM 20966 / LMG 6465 / NBRC 14845 / NCIMB 13405 / ORS 571).